The primary structure comprises 584 residues: Leucine-rich repeat and fibronectin type III domain-containing protein 1 (584 aa).

An N-terminal signal peptide occupies residues 1–17; the sequence is MERLVFCVLVFGALAKA. Residues 18-51 enclose the LRRNT domain; the sequence is QLCPGRCICQTISPTLTLLCAKTGLLFVPPTVDR. Residues 18–494 lie on the Extracellular side of the membrane; it reads QLCPGRCICQ…VPSQFLGGTM (477 aa). LRR repeat units lie at residues 52–73, 76–97, 100–121, 124–145, 149–170, 173–194, and 197–218; these read KTVELRLTDNFITAVRRKDFLN, SLVHLTLSRNTISQIAPHAFMG, SLRALHMDGNRLSVINSDQLKG, NLRHLILGNNQIHHIEESSFDE, TIEDLDLSYNNLRTLPWEAIAR, NINTLTLDHNLIDHIGVGTFTL, and KLVRLDMTSNRLQTLPPDTLFQ. An N-linked (GlcNAc...) asparagine glycan is attached at Asn-73. The LRRCT domain maps to 241–287; that stretch reads NPLHCNCELLWLRRLTREDDLETCASPEHLMDKYFWSIQEEEFICEP. The Ig-like domain maps to 288–375; the sequence is PLITKHQVTK…GIATAAVHVH (88 aa). Cys-310 and Cys-359 are oxidised to a cystine. Asn-332, Asn-341, Asn-384, Asn-408, and Asn-421 each carry an N-linked (GlcNAc...) asparagine glycan. Residues 393-414 form a disordered region; it reads DPGLSDISTSSRSSSNDSKTHS. Residues 397 to 409 show a composition bias toward low complexity; that stretch reads SDISTSSRSSSND. The helical transmembrane segment at 495–515 threads the bilayer; sequence IIIIGGIIVASVLVFIIILMI. Topologically, residues 516–584 are cytoplasmic; that stretch reads RYKAYSGGGG…MVLPILHLLF (69 aa). Positions 539 to 564 are disordered; the sequence is HVHSQTNGSRSAATKQSEEPPESPAG. Over residues 540-553 the composition is skewed to polar residues; it reads VHSQTNGSRSAATK.

It belongs to the LRFN family.

It is found in the membrane. It localises to the synapse. Its function is as follows. Involved in the regulation of excitatory synapses. The polypeptide is Leucine-rich repeat and fibronectin type III domain-containing protein 1 (lrfn1) (Danio rerio (Zebrafish)).